Reading from the N-terminus, the 694-residue chain is Putative ankyrin repeat protein RBE_0921 (694 aa).

10 ANK repeats span residues 122 to 151 (LGKT…NINV), 155 to 185 (NGRN…NINS), 216 to 245 (FNRT…NVEA), 249 to 275 (TGET…NTEA), 279 to 317 (LGRT…NPNA), 321 to 350 (YGFT…KFKK), 351 to 382 (NRYE…NIND), 384 to 413 (NGQN…DNGK), 423 to 452 (QRNT…DINA), and 456 to 485 (DGET…DINI).

The chain is Putative ankyrin repeat protein RBE_0921 from Rickettsia bellii (strain RML369-C).